The following is a 184-amino-acid chain: Threonylcarbamoyl-AMP synthase (184 aa).

One can recognise a YrdC-like domain in the interval Ala-3–Gln-184.

The protein belongs to the SUA5 family. TsaC subfamily.

It is found in the cytoplasm. The enzyme catalyses L-threonine + hydrogencarbonate + ATP = L-threonylcarbamoyladenylate + diphosphate + H2O. Functionally, required for the formation of a threonylcarbamoyl group on adenosine at position 37 (t(6)A37) in tRNAs that read codons beginning with adenine. Catalyzes the conversion of L-threonine, HCO(3)(-)/CO(2) and ATP to give threonylcarbamoyl-AMP (TC-AMP) as the acyladenylate intermediate, with the release of diphosphate. In Hahella chejuensis (strain KCTC 2396), this protein is Threonylcarbamoyl-AMP synthase.